Reading from the N-terminus, the 354-residue chain is Probable trehalose-phosphate phosphatase E (354 aa).

It belongs to the trehalose phosphatase family. A divalent metal cation serves as cofactor.

The catalysed reaction is alpha,alpha-trehalose 6-phosphate + H2O = alpha,alpha-trehalose + phosphate. It participates in glycan biosynthesis; trehalose biosynthesis. In terms of biological role, removes the phosphate from trehalose 6-phosphate to produce free trehalose. Trehalose accumulation in plant may improve abiotic stress tolerance. This Arabidopsis thaliana (Mouse-ear cress) protein is Probable trehalose-phosphate phosphatase E (TPPE).